A 442-amino-acid polypeptide reads, in one-letter code: ATP-dependent protease ATPase subunit HslU (442 aa).

ATP is bound by residues Ile18 and 60 to 65 (GVGKTE). A disordered region spans residues 136 to 157 (LPKPKNDWESTETDSSSNTRQV). Asp255, Glu320, and Arg392 together coordinate ATP.

The protein belongs to the ClpX chaperone family. HslU subfamily. A double ring-shaped homohexamer of HslV is capped on each side by a ring-shaped HslU homohexamer. The assembly of the HslU/HslV complex is dependent on binding of ATP.

The protein localises to the cytoplasm. ATPase subunit of a proteasome-like degradation complex; this subunit has chaperone activity. The binding of ATP and its subsequent hydrolysis by HslU are essential for unfolding of protein substrates subsequently hydrolyzed by HslV. HslU recognizes the N-terminal part of its protein substrates and unfolds these before they are guided to HslV for hydrolysis. This Shewanella baltica (strain OS185) protein is ATP-dependent protease ATPase subunit HslU.